The sequence spans 318 residues: Pantothenate kinase (318 aa).

Residue 96 to 103 (GSVAVGKS) coordinates ATP.

Belongs to the prokaryotic pantothenate kinase family.

The protein localises to the cytoplasm. It carries out the reaction (R)-pantothenate + ATP = (R)-4'-phosphopantothenate + ADP + H(+). Its pathway is cofactor biosynthesis; coenzyme A biosynthesis; CoA from (R)-pantothenate: step 1/5. This is Pantothenate kinase from Afipia carboxidovorans (strain ATCC 49405 / DSM 1227 / KCTC 32145 / OM5) (Oligotropha carboxidovorans).